The chain runs to 296 residues: Fructose-bisphosphate aldolase class 1 (296 aa).

Residue Glu175 is the Proton acceptor of the active site. Lys212 acts as the Schiff-base intermediate with dihydroxyacetone-P in catalysis.

This sequence belongs to the class I fructose-bisphosphate aldolase family.

It carries out the reaction beta-D-fructose 1,6-bisphosphate = D-glyceraldehyde 3-phosphate + dihydroxyacetone phosphate. Its pathway is carbohydrate degradation; glycolysis; D-glyceraldehyde 3-phosphate and glycerone phosphate from D-glucose: step 4/4. The sequence is that of Fructose-bisphosphate aldolase class 1 from Staphylococcus aureus (strain bovine RF122 / ET3-1).